Consider the following 372-residue polypeptide: Pluviatolide O-methyltransferase (372 aa).

Residues glycine 214, aspartate 237, aspartate 257, methionine 258, and lysine 271 each contribute to the S-adenosyl-L-homocysteine site. Residue histidine 275 is the Proton acceptor of the active site. Catalysis depends on residues aspartate 306 and glutamate 338.

It belongs to the class I-like SAM-binding methyltransferase superfamily. Cation-independent O-methyltransferase family. COMT subfamily. As to quaternary structure, homodimer. As to expression, mostly expressed in stems, and, to a lower extent, in leaves.

It carries out the reaction (-)-pluviatolide + S-adenosyl-L-methionine = (-)-bursehernin + S-adenosyl-L-homocysteine + H(+). It participates in aromatic compound metabolism; phenylpropanoid biosynthesis. Its function is as follows. O-methyltransferase involved in the biosynthesis of etoposide, a chemotherapeutic compound of the topoisomerase inhibitor family. Catalyzes the methylation of (-)-pluviatolide to produce (-)-bursehernin. The protein is Pluviatolide O-methyltransferase of Sinopodophyllum hexandrum (Himalayan may apple).